A 118-amino-acid polypeptide reads, in one-letter code: UPF0342 protein BPUM_0928 (118 aa).

The protein belongs to the UPF0342 family.

In Bacillus pumilus (strain SAFR-032), this protein is UPF0342 protein BPUM_0928.